We begin with the raw amino-acid sequence, 101 residues long: Small ribosomal subunit protein bS18c (101 aa).

It belongs to the bacterial ribosomal protein bS18 family. Part of the 30S ribosomal subunit.

It is found in the plastid. The protein resides in the chloroplast. The polypeptide is Small ribosomal subunit protein bS18c (Populus alba (White poplar)).